Here is a 210-residue protein sequence, read N- to C-terminus: dTTP/UTP pyrophosphatase (210 aa).

Asp89 functions as the Proton acceptor in the catalytic mechanism.

Belongs to the Maf family. YhdE subfamily. A divalent metal cation serves as cofactor.

The protein resides in the cytoplasm. It catalyses the reaction dTTP + H2O = dTMP + diphosphate + H(+). It carries out the reaction UTP + H2O = UMP + diphosphate + H(+). In terms of biological role, nucleoside triphosphate pyrophosphatase that hydrolyzes dTTP and UTP. May have a dual role in cell division arrest and in preventing the incorporation of modified nucleotides into cellular nucleic acids. The sequence is that of dTTP/UTP pyrophosphatase from Burkholderia lata (strain ATCC 17760 / DSM 23089 / LMG 22485 / NCIMB 9086 / R18194 / 383).